A 426-amino-acid chain; its full sequence is Histidine--tRNA ligase (426 aa).

It belongs to the class-II aminoacyl-tRNA synthetase family. In terms of assembly, homodimer.

It localises to the cytoplasm. The enzyme catalyses tRNA(His) + L-histidine + ATP = L-histidyl-tRNA(His) + AMP + diphosphate + H(+). This chain is Histidine--tRNA ligase, found in Streptococcus pyogenes serotype M5 (strain Manfredo).